The chain runs to 351 residues: Probable E3 ubiquitin-protein ligase sinah (351 aa).

A disordered region spans residues 1 to 38 (MSVRNSRPQLSWPERVSPQRTIDTPTASGEMLTRRQSA). Positions 18–27 (PQRTIDTPTA) are enriched in polar residues. The RING-type zinc finger occupies 106–141 (CPVCFGYIMPPIMQCPRGHLICSTCRSKLTICPVCR). Residues 155 to 346 (VASKLIFPCK…LALNVVIRKV (192 aa)) form an SBD region. Residues 158-218 (KLIFPCKHSH…VYQHLMSSHE (61 aa)) form an SIAH-type zinc finger. Cysteine 163, cysteine 170, histidine 182, cysteine 186, cysteine 193, cysteine 200, histidine 212, and histidine 217 together coordinate Zn(2+).

The protein belongs to the SINA (Seven in absentia) family. Interacts with ebi and phyl.

The enzyme catalyses S-ubiquitinyl-[E2 ubiquitin-conjugating enzyme]-L-cysteine + [acceptor protein]-L-lysine = [E2 ubiquitin-conjugating enzyme]-L-cysteine + N(6)-ubiquitinyl-[acceptor protein]-L-lysine.. It functions in the pathway protein modification; protein ubiquitination. E3 ubiquitin-protein ligase that mediates ubiquitination and subsequent proteasomal degradation of target proteins. The adapter phyl is required to direct the degradation of the two isoforms of the transcriptional repressor Tramtrack (Ttk). E3 ubiquitin ligases accept ubiquitin from an E2 ubiquitin-conjugating enzyme in the form of a thioester and then directly transfers the ubiquitin to targeted substrates. It probably triggers the ubiquitin-mediated degradation of different substrates. A phyl-independent mechanism of degradation exists for isoform beta of ttk that involves motifs in the C-terminus of ttk. This Drosophila melanogaster (Fruit fly) protein is Probable E3 ubiquitin-protein ligase sinah (sinah).